The primary structure comprises 198 residues: Probable GTP-binding protein EngB (198 aa).

The EngB-type G domain maps to 27 to 198; it reads DLPEVALAGR…ESWDTILSEL (172 aa). GTP is bound by residues 35–42, 62–66, 80–83, 147–150, and 179–181; these read GRSNVGKS, GKTQL, DVPG, TKAD, and FSS. Mg(2+) contacts are provided by Ser-42 and Thr-64.

This sequence belongs to the TRAFAC class TrmE-Era-EngA-EngB-Septin-like GTPase superfamily. EngB GTPase family. The cofactor is Mg(2+).

Necessary for normal cell division and for the maintenance of normal septation. The protein is Probable GTP-binding protein EngB of Streptococcus agalactiae serotype Ia (strain ATCC 27591 / A909 / CDC SS700).